The sequence spans 103 residues: Nematocin (103 aa).

An N-terminal signal peptide occupies residues 1-19 (MGSSPILLVLAISIGLASA). The cysteines at positions 20 and 25 are disulfide-linked. Residue tyrosine 30 is modified to Tyrosine amide. A propeptide spanning residues 31 to 103 (GRTIRCSSCG…QGGCQTSAMC (73 aa)) is cleaved from the precursor.

The protein belongs to the vasopressin/oxytocin family. As to expression, detected in thermosensory AFD neurons, neurosecretory NSM cells, AVK interneurons, pharyngeal neuron M5, and the mechanosensory DVA neuron. Detected in male-specific CP motor neurons.

The protein resides in the secreted. Ligand for the G-protein coupled receptor ntr-1. Plays a role in gustatory associative learning. Also plays a role in male mating behavior. The sequence is that of Nematocin from Caenorhabditis elegans.